Here is a 348-residue protein sequence, read N- to C-terminus: Holliday junction branch migration complex subunit RuvB (348 aa).

Residues 1–10 (MAIVSSSSGR) are compositionally biased toward low complexity. The disordered stretch occupies residues 1-37 (MAIVSSSSGRKPPRRPEALMDPQQAPEEVVSRPEDKL). The interval 13 to 198 (PRRPEALMDP…FGLIQRLEFY (186 aa)) is large ATPase domain (RuvB-L). The ATP site is built by L37, R38, G79, K82, T83, T84, R188, Y198, and R235. T83 lines the Mg(2+) pocket. The tract at residues 199 to 271 (GQGDLEAIVE…LVGEALSLHR (73 aa)) is small ATPAse domain (RuvB-S). Residues 274-348 (HRGLDASDRR…AARSHLAEAA (75 aa)) are head domain (RuvB-H). DNA contacts are provided by R329 and R334.

It belongs to the RuvB family. As to quaternary structure, homohexamer. Forms an RuvA(8)-RuvB(12)-Holliday junction (HJ) complex. HJ DNA is sandwiched between 2 RuvA tetramers; dsDNA enters through RuvA and exits via RuvB. An RuvB hexamer assembles on each DNA strand where it exits the tetramer. Each RuvB hexamer is contacted by two RuvA subunits (via domain III) on 2 adjacent RuvB subunits; this complex drives branch migration. In the full resolvosome a probable DNA-RuvA(4)-RuvB(12)-RuvC(2) complex forms which resolves the HJ.

It is found in the cytoplasm. The catalysed reaction is ATP + H2O = ADP + phosphate + H(+). Its function is as follows. The RuvA-RuvB-RuvC complex processes Holliday junction (HJ) DNA during genetic recombination and DNA repair, while the RuvA-RuvB complex plays an important role in the rescue of blocked DNA replication forks via replication fork reversal (RFR). RuvA specifically binds to HJ cruciform DNA, conferring on it an open structure. The RuvB hexamer acts as an ATP-dependent pump, pulling dsDNA into and through the RuvAB complex. RuvB forms 2 homohexamers on either side of HJ DNA bound by 1 or 2 RuvA tetramers; 4 subunits per hexamer contact DNA at a time. Coordinated motions by a converter formed by DNA-disengaged RuvB subunits stimulates ATP hydrolysis and nucleotide exchange. Immobilization of the converter enables RuvB to convert the ATP-contained energy into a lever motion, pulling 2 nucleotides of DNA out of the RuvA tetramer per ATP hydrolyzed, thus driving DNA branch migration. The RuvB motors rotate together with the DNA substrate, which together with the progressing nucleotide cycle form the mechanistic basis for DNA recombination by continuous HJ branch migration. Branch migration allows RuvC to scan DNA until it finds its consensus sequence, where it cleaves and resolves cruciform DNA. The protein is Holliday junction branch migration complex subunit RuvB of Synechococcus sp. (strain CC9605).